Consider the following 126-residue polypeptide: Fatty acid-binding protein 2, liver (126 aa).

Cholate is bound by residues 54-56 (TPN), 99-101 (HIQ), and arginine 121.

It belongs to the calycin superfamily. Fatty-acid binding protein (FABP) family.

It is found in the cytoplasm. In terms of biological role, binds free fatty acids and their coenzyme A derivatives, bilirubin, and some other small molecules in the cytoplasm. May be involved in intracellular lipid transport. The specificity of axolotl L-FABP differs from that of LB-FABP. Binds 2 ligands per protein molecule. This Ambystoma mexicanum (Axolotl) protein is Fatty acid-binding protein 2, liver.